A 62-amino-acid polypeptide reads, in one-letter code: UPF0434 protein Rleg2_3773 (62 aa).

The protein belongs to the UPF0434 family.

The chain is UPF0434 protein Rleg2_3773 from Rhizobium leguminosarum bv. trifolii (strain WSM2304).